A 124-amino-acid chain; its full sequence is MADEEEDPTFEEENEEIGGGAEGGQGKRKRLFSKELRCMMYGFGDDQNPYTESVDILEDLVIEFITEMTHKAMSIGRQGRVQVEDIVFLIRKDPRKFARVKDLLTMNEELKRARKAFDEANYGS.

Positions 1-16 (MADEEEDPTFEEENEE) are enriched in acidic residues. The tract at residues 1–28 (MADEEEDPTFEEENEEIGGGAEGGQGKR) is disordered. The Histone-fold domain maps to 32–74 (FSKELRCMMYGFGDDQNPYTESVDILEDLVIEFITEMTHKAMS).

This sequence belongs to the TAF13 family. In terms of assembly, component of the TFIID basal transcription factor complex, composed of TATA-box-binding protein TBP, and a number of TBP-associated factors (TAFs), including TAF1, TAF2, TAF3, TAF4, TAF5, TAF6, TAF7, TAF8, TAF9, TAF10, TAF11, TAF12 and TAF13. Interacts with TBP, and more strongly with TAF10 and TAF11.

It localises to the nucleus. In terms of biological role, the TFIID basal transcription factor complex plays a major role in the initiation of RNA polymerase II (Pol II)-dependent transcription. TFIID recognizes and binds promoters via its subunit TBP, a TATA-box-binding protein, and promotes assembly of the pre-initiation complex (PIC). The TFIID complex consists of TBP and TBP-associated factors (TAFs), including TAF1, TAF2, TAF3, TAF4, TAF5, TAF6, TAF7, TAF8, TAF9, TAF10, TAF11, TAF12 and TAF13. TAF13, together with TAF11 and TBP, play key roles during promoter binding by the TFIID and TFIIA transcription factor complexes. The sequence is that of Transcription initiation factor TFIID subunit 13 from Bos taurus (Bovine).